The primary structure comprises 122 residues: MIGTILAVGFGGFLGAISRMLTSSFFNKIIPHDFPYGTLLVNIIGSFLMGLFFSYASSKGVHIFTKSLISTGFLSAFTTFSTFSYENLLFLQSGDYFHFFLNIILNVILCLLAVWIGFLIFK.

A run of 4 helical transmembrane segments spans residues 1–21, 34–54, 60–80, and 100–120; these read MIGT…SRML, FPYG…LFFS, GVHI…FTTF, and FLNI…GFLI.

Belongs to the fluoride channel Fluc/FEX (TC 1.A.43) family.

The protein localises to the cell inner membrane. It carries out the reaction fluoride(in) = fluoride(out). Its function is as follows. Fluoride-specific ion channel. Important for reducing fluoride concentration in the cell, thus reducing its toxicity. This chain is Fluoride-specific ion channel FluC, found in Campylobacter lari (strain RM2100 / D67 / ATCC BAA-1060).